A 77-amino-acid chain; its full sequence is Small ribosomal subunit protein bS18 (77 aa).

It belongs to the bacterial ribosomal protein bS18 family. Part of the 30S ribosomal subunit. Forms a tight heterodimer with protein bS6.

Its function is as follows. Binds as a heterodimer with protein bS6 to the central domain of the 16S rRNA, where it helps stabilize the platform of the 30S subunit. This is Small ribosomal subunit protein bS18 from Bacillus cytotoxicus (strain DSM 22905 / CIP 110041 / 391-98 / NVH 391-98).